The primary structure comprises 121 residues: Basic phospholipase A2 CoaTx-II (121 aa).

7 disulfide bridges follow: Cys26/Cys115, Cys28/Cys44, Cys43/Cys95, Cys49/Cys121, Cys50/Cys88, Cys57/Cys81, and Cys75/Cys86. The important for membrane-damaging activities in eukaryotes and bacteria; heparin-binding stretch occupies residues 105-117; the sequence is KKYRIYPKFLCKK.

This sequence belongs to the phospholipase A2 family. Group II subfamily. K49 sub-subfamily. Homodimer; non-covalently-linked. As to expression, expressed by the venom gland.

It is found in the secreted. Its function is as follows. Snake venom phospholipase A2 (PLA2) that lacks enzymatic inactivity. It shows antibacterial activity against both Gram-negative and Gram-positive bacteria, including methicillin-resistant strains. In vivo, it causes local muscular damage, but no systemic damage (intravenous administration does not elevate plasma creatine kinase). Also causes an inflammatory activity that is demonstrated by mice paw edema induction and pro-inflammatory cytokine IL-6 elevation. A model of myotoxic mechanism has been proposed: an apo Lys49-PLA2 is activated by the entrance of a hydrophobic molecule (e.g. fatty acid) at the hydrophobic channel of the protein leading to a reorientation of a monomer. This reorientation causes a transition between 'inactive' to 'active' states, causing alignment of C-terminal and membrane-docking sites (MDoS) side-by-side and putting the membrane-disruption sites (MDiS) in the same plane, exposed to solvent and in a symmetric position for both monomers. The MDoS region stabilizes the toxin on membrane by the interaction of charged residues with phospholipid head groups. Subsequently, the MDiS region destabilizes the membrane with penetration of hydrophobic residues. This insertion causes a disorganization of the membrane, allowing an uncontrolled influx of ions (i.e. calcium and sodium), and eventually triggering irreversible intracellular alterations and cell death. The chain is Basic phospholipase A2 CoaTx-II from Crotalus lutosus abyssus (Grand Canyon rattlesnake).